The following is a 49-amino-acid chain: Disintegrin echistatin-gamma (49 aa).

The Disintegrin domain maps to 1–47; the sequence is DCASGPCCRDCKFLEEGTICNMARGDDMDDYCNGKTCDCPRNPHKWP. 4 cysteine pairs are disulfide-bonded: C2/C11, C7/C32, C8/C37, and C20/C39. The Cell attachment site signature appears at 24–26; sequence RGD.

The protein belongs to the venom metalloproteinase (M12B) family. P-II subfamily. P-IIa sub-subfamily. In terms of assembly, monomer. Expressed by the venom gland.

It localises to the secreted. Its function is as follows. Has antiplatelet activities on guinea pig, followed by human, rabbit and rat platelet-rich plasma. The chain is Disintegrin echistatin-gamma from Echis pyramidum leakeyi (Leakey's carpet viper).